A 497-amino-acid chain; its full sequence is Probable cytosol aminopeptidase (497 aa).

Residues K267 and D272 each contribute to the Mn(2+) site. K279 is an active-site residue. Mn(2+) contacts are provided by D290, D349, and E351. The active site involves R353.

This sequence belongs to the peptidase M17 family. It depends on Mn(2+) as a cofactor.

The protein resides in the cytoplasm. The enzyme catalyses Release of an N-terminal amino acid, Xaa-|-Yaa-, in which Xaa is preferably Leu, but may be other amino acids including Pro although not Arg or Lys, and Yaa may be Pro. Amino acid amides and methyl esters are also readily hydrolyzed, but rates on arylamides are exceedingly low.. It catalyses the reaction Release of an N-terminal amino acid, preferentially leucine, but not glutamic or aspartic acids.. Presumably involved in the processing and regular turnover of intracellular proteins. Catalyzes the removal of unsubstituted N-terminal amino acids from various peptides. The sequence is that of Probable cytosol aminopeptidase from Nitrosomonas europaea (strain ATCC 19718 / CIP 103999 / KCTC 2705 / NBRC 14298).